The following is a 197-amino-acid chain: Probable GTP-binding protein EngB (197 aa).

Positions 25–197 (SAPEIAFAGR…VRDEFFKFTR (173 aa)) constitute an EngB-type G domain. GTP contacts are provided by residues 33–40 (GRSNVGKS), 60–64 (GCTRQ), 79–82 (DLPG), 146–149 (TKID), and 177–179 (MSI). Residues Ser40 and Thr62 each contribute to the Mg(2+) site.

It belongs to the TRAFAC class TrmE-Era-EngA-EngB-Septin-like GTPase superfamily. EngB GTPase family. Mg(2+) is required as a cofactor.

Its function is as follows. Necessary for normal cell division and for the maintenance of normal septation. The sequence is that of Probable GTP-binding protein EngB from Wolbachia sp. subsp. Drosophila simulans (strain wRi).